A 296-amino-acid chain; its full sequence is Nitrogenase iron protein (296 aa).

ATP is bound at residue 11-18 (GKGGIGKS). A [4Fe-4S] cluster-binding site is contributed by Cys99. Residue Arg102 is modified to ADP-ribosylarginine; by dinitrogenase reductase ADP-ribosyltransferase. Residue Cys133 coordinates [4Fe-4S] cluster.

Belongs to the NifH/BchL/ChlL family. Homodimer. [4Fe-4S] cluster is required as a cofactor. In terms of processing, the reversible ADP-ribosylation of Arg-102 inactivates the nitrogenase reductase and regulates nitrogenase activity.

The catalysed reaction is N2 + 8 reduced [2Fe-2S]-[ferredoxin] + 16 ATP + 16 H2O = H2 + 8 oxidized [2Fe-2S]-[ferredoxin] + 2 NH4(+) + 16 ADP + 16 phosphate + 6 H(+). Its function is as follows. The key enzymatic reactions in nitrogen fixation are catalyzed by the nitrogenase complex, which has 2 components: the iron protein and the molybdenum-iron protein. This chain is Nitrogenase iron protein (nifH1), found in Sinorhizobium fredii (strain NBRC 101917 / NGR234).